We begin with the raw amino-acid sequence, 277 residues long: MAAVSVFQAPVGGFSFDNCRRNAVLEADFAKKGFKLPKARKTGTTIAGVVYKDGIVLGADTRATEGMVVADKNCSKIHFISPNIYCCGAGTAADTDMTTQLISSNLELHSLTTGRLPRVVTANRMLKQMLFRYQGYIGAALVLGGVDVTGPHLYSIYPHGSTDKLPYVTMGSGSLAAMAVFEDKFRPDMEEEEAKKLVSEAIAAGIFNDLGSGSNIDLCVISKSKLDFLRPYSVPNKKGTRFGRYRCEKGTTAVLTEKVTPLELEVLEEIVQTMDTS.

The propeptide at 1–43 (MAAVSVFQAPVGGFSFDNCRRNAVLEADFAKKGFKLPKARKTG) is removed in mature form. T44 acts as the Nucleophile in catalysis.

Belongs to the peptidase T1B family. In terms of assembly, the 26S proteasome consists of a 20S proteasome core and two 19S regulatory subunits. The 20S proteasome core is a barrel-shaped complex made of 28 subunits that are arranged in four stacked rings. The two outer rings are each formed by seven alpha subunits, and the two inner rings are formed by seven beta subunits. The proteolytic activity is exerted by three beta-subunits PSMB5, PSMB6 and PSMB7.

Its subcellular location is the cytoplasm. The protein localises to the nucleus. The catalysed reaction is Cleavage of peptide bonds with very broad specificity.. Functionally, component of the 20S core proteasome complex involved in the proteolytic degradation of most intracellular proteins. This complex plays numerous essential roles within the cell by associating with different regulatory particles. Associated with two 19S regulatory particles, forms the 26S proteasome and thus participates in the ATP-dependent degradation of ubiquitinated proteins. The 26S proteasome plays a key role in the maintenance of protein homeostasis by removing misfolded or damaged proteins that could impair cellular functions, and by removing proteins whose functions are no longer required. Associated with the PA200 or PA28, the 20S proteasome mediates ubiquitin-independent protein degradation. This type of proteolysis is required in several pathways including spermatogenesis (20S-PA200 complex) or generation of a subset of MHC class I-presented antigenic peptides (20S-PA28 complex). Within the 20S core complex, PSMB7 displays a trypsin-like activity. This is Proteasome subunit beta type-7 (Psmb7) from Rattus norvegicus (Rat).